A 260-amino-acid polypeptide reads, in one-letter code: MPLKFTEVMEAEITKAIVETASEEWVEYAESDVIVVGAGPSGLTAARYLAEKGLKTLVLERRLSFGGGIGGGGMLFHKVVVEREAKDILDDFGIRYTEHRNFLVADSAEFMAKLAAKAIDAGAKIIHGVSVEDVIFRDDPLGVRGVCIQWSAVEISGLHVDPLFLRSRAVVDATGHDAEVISVAARKIPLEVSVVGERSAYSEVAEREIVEKTGKIVKGLYAAGMAVAAVHNLPRMGPIFGGMLLSGKKVAEIVAEDLKL.

NAD(+)-binding positions include S41, 60–61, G68, V131, and 159–161; these read ER and HVD. Residues D161 and H176 each coordinate Fe cation. M225 is an NAD(+) binding site. Glycine is bound at residue R235.

It belongs to the THI4 family. As to quaternary structure, homooctamer; tetramer of dimers. Requires Fe(2+) as cofactor.

The catalysed reaction is hydrogen sulfide + glycine + NAD(+) = ADP-5-ethyl-4-methylthiazole-2-carboxylate + nicotinamide + 3 H2O + H(+). The protein operates within cofactor biosynthesis; thiamine diphosphate biosynthesis. Involved in the biosynthesis of the thiazole moiety of thiamine. Catalyzes the conversion of NAD and glycine to adenosine diphosphate 5-(2-hydroxyethyl)-4-methylthiazole-2-carboxylate (ADT), an adenylated thiazole intermediate, using free sulfide as a source of sulfur. In Archaeoglobus fulgidus (strain ATCC 49558 / DSM 4304 / JCM 9628 / NBRC 100126 / VC-16), this protein is Thiamine thiazole synthase.